Here is a 682-residue protein sequence, read N- to C-terminus: Methionine--tRNA ligase (682 aa).

The 'HIGH' region motif lies at 14-24 (PYANGSIHLGH). Cysteine 145, cysteine 148, cysteine 158, and cysteine 161 together coordinate Zn(2+). Positions 331-335 (KMSKS) match the 'KMSKS' region motif. Position 334 (lysine 334) interacts with ATP. The tRNA-binding domain occupies 580-682 (AFAAIDLRVA…SGARPGQRIK (103 aa)).

The protein belongs to the class-I aminoacyl-tRNA synthetase family. MetG type 1 subfamily. In terms of assembly, homodimer. The cofactor is Zn(2+).

The protein resides in the cytoplasm. It catalyses the reaction tRNA(Met) + L-methionine + ATP = L-methionyl-tRNA(Met) + AMP + diphosphate. Its function is as follows. Is required not only for elongation of protein synthesis but also for the initiation of all mRNA translation through initiator tRNA(fMet) aminoacylation. The chain is Methionine--tRNA ligase from Pseudomonas syringae pv. syringae (strain B728a).